Reading from the N-terminus, the 291-residue chain is Phosphoribosylaminoimidazole-succinocarboxamide synthase (291 aa).

Belongs to the SAICAR synthetase family.

The catalysed reaction is 5-amino-1-(5-phospho-D-ribosyl)imidazole-4-carboxylate + L-aspartate + ATP = (2S)-2-[5-amino-1-(5-phospho-beta-D-ribosyl)imidazole-4-carboxamido]succinate + ADP + phosphate + 2 H(+). It participates in purine metabolism; IMP biosynthesis via de novo pathway; 5-amino-1-(5-phospho-D-ribosyl)imidazole-4-carboxamide from 5-amino-1-(5-phospho-D-ribosyl)imidazole-4-carboxylate: step 1/2. This is Phosphoribosylaminoimidazole-succinocarboxamide synthase (ADE1) from Candida albicans (Yeast).